The chain runs to 64 residues: U2-aranetoxin-Av1a (64 aa).

In terms of tissue distribution, expressed in fat body, but not in cephalothorax, silk gland, midgut.

In terms of biological role, insecticidal toxin. The protein is U2-aranetoxin-Av1a of Araneus ventricosus (Orbweaver spider).